The sequence spans 440 residues: Zinc finger MYND domain-containing protein 10 (440 aa).

Residues 366-440 form an interaction with DNAAF11 region; that stretch reads QDLRLQARRW…VLAAQGDRAK (75 aa). Cys-394, Cys-397, Cys-405, Cys-408, Cys-414, Cys-418, His-426, and Cys-430 together coordinate Zn(2+). The segment at 394 to 430 adopts an MYND-type zinc-finger fold; the sequence is CAYCSAEASKRCSRCQNEWYCCRECQVKHWEKHGKTC.

This sequence belongs to the ZMYND10 family. In terms of assembly, interacts (via C-terminus) with DNAAF11 (via CS domain); this interaction stabilizes DNAAF11 at the protein level. Interacts (via C-terminus) with DNAL1; this interaction stabilizes DNAL1 at the protein level. Interacts with DNAAF4, HSPA8, IQUB, RUVBL2 and DYNTL5.

The protein localises to the cytoplasm. It localises to the cytoskeleton. It is found in the microtubule organizing center. Its subcellular location is the centrosome. The protein resides in the centriolar satellite. The protein localises to the apical cell membrane. It localises to the dynein axonemal particle. In terms of biological role, plays a role in axonemal structure organization and motility. Involved in axonemal pre-assembly of inner and outer dynein arms (IDA and ODA, respectively) for proper axoneme building for cilia motility. May act by indirectly regulating transcription of dynein proteins. This chain is Zinc finger MYND domain-containing protein 10, found in Homo sapiens (Human).